The primary structure comprises 218 residues: Histone chaperone ASF1B (218 aa).

The protein belongs to the ASF1 family. In terms of assembly, interacts with histone H3 and histone H4. Interacts strongly with the N-terminus of TOUSLED. Phosphorylated in vitro by TOUSLED.

Its subcellular location is the nucleus. Functionally, histone chaperone that facilitates histone deposition and histone exchange and removal during nucleosome assembly and disassembly. This is Histone chaperone ASF1B (ASF1B) from Arabidopsis thaliana (Mouse-ear cress).